The sequence spans 1101 residues: Isoleucine--tRNA ligase (1101 aa).

Residues 50 to 60 (PFANGLPHYGH) carry the 'HIGH' region motif. Positions 629–633 (KLSKR) match the 'KMSKS' region motif. Lys632 serves as a coordination point for ATP.

Belongs to the class-I aminoacyl-tRNA synthetase family. IleS type 2 subfamily. In terms of assembly, monomer. It depends on Zn(2+) as a cofactor.

The protein resides in the cytoplasm. The enzyme catalyses tRNA(Ile) + L-isoleucine + ATP = L-isoleucyl-tRNA(Ile) + AMP + diphosphate. Functionally, catalyzes the attachment of isoleucine to tRNA(Ile). As IleRS can inadvertently accommodate and process structurally similar amino acids such as valine, to avoid such errors it has two additional distinct tRNA(Ile)-dependent editing activities. One activity is designated as 'pretransfer' editing and involves the hydrolysis of activated Val-AMP. The other activity is designated 'posttransfer' editing and involves deacylation of mischarged Val-tRNA(Ile). The protein is Isoleucine--tRNA ligase of Anaplasma marginale (strain St. Maries).